Reading from the N-terminus, the 200-residue chain is Probable molybdenum cofactor guanylyltransferase (200 aa).

GTP is bound by residues 9-11 (LAG), Lys-21, Asp-69, and Asp-100. Asp-100 is a binding site for Mg(2+).

This sequence belongs to the MobA family. It depends on Mg(2+) as a cofactor.

The protein resides in the cytoplasm. The enzyme catalyses Mo-molybdopterin + GTP + H(+) = Mo-molybdopterin guanine dinucleotide + diphosphate. Its function is as follows. Transfers a GMP moiety from GTP to Mo-molybdopterin (Mo-MPT) cofactor (Moco or molybdenum cofactor) to form Mo-molybdopterin guanine dinucleotide (Mo-MGD) cofactor. In Bacillus cereus (strain G9842), this protein is Probable molybdenum cofactor guanylyltransferase.